We begin with the raw amino-acid sequence, 165 residues long: Crossover junction endodeoxyribonuclease RuvC (165 aa).

Active-site residues include Asp-8, Glu-66, and Asp-138. Mg(2+)-binding residues include Asp-8, Glu-66, and Asp-138.

It belongs to the RuvC family. As to quaternary structure, homodimer which binds Holliday junction (HJ) DNA. The HJ becomes 2-fold symmetrical on binding to RuvC with unstacked arms; it has a different conformation from HJ DNA in complex with RuvA. In the full resolvosome a probable DNA-RuvA(4)-RuvB(12)-RuvC(2) complex forms which resolves the HJ. It depends on Mg(2+) as a cofactor.

It is found in the cytoplasm. It carries out the reaction Endonucleolytic cleavage at a junction such as a reciprocal single-stranded crossover between two homologous DNA duplexes (Holliday junction).. Its function is as follows. The RuvA-RuvB-RuvC complex processes Holliday junction (HJ) DNA during genetic recombination and DNA repair. Endonuclease that resolves HJ intermediates. Cleaves cruciform DNA by making single-stranded nicks across the HJ at symmetrical positions within the homologous arms, yielding a 5'-phosphate and a 3'-hydroxyl group; requires a central core of homology in the junction. The consensus cleavage sequence is 5'-(A/T)TT(C/G)-3'. Cleavage occurs on the 3'-side of the TT dinucleotide at the point of strand exchange. HJ branch migration catalyzed by RuvA-RuvB allows RuvC to scan DNA until it finds its consensus sequence, where it cleaves and resolves the cruciform DNA. The protein is Crossover junction endodeoxyribonuclease RuvC of Methylococcus capsulatus (strain ATCC 33009 / NCIMB 11132 / Bath).